The following is a 150-amino-acid chain: Small ribosomal subunit protein eS19 (150 aa).

Belongs to the eukaryotic ribosomal protein eS19 family. In terms of assembly, part of the 30S ribosomal subunit.

In terms of biological role, may be involved in maturation of the 30S ribosomal subunit. The polypeptide is Small ribosomal subunit protein eS19 (rps19e) (Pyrococcus abyssi (strain GE5 / Orsay)).